The following is a 123-amino-acid chain: Urotensin-2 (123 aa).

Residues 1–20 (MDRVPFCCLLFIGLLNPLLS) form the signal peptide. Propeptides lie at residues 21 to 104 (LPVT…LART) and 107 to 109 (QHK). Positions 57–88 (RQTMGTEAGESPGEAGPSTETPTPRGSMRKAF) are disordered. Cysteines 117 and 122 form a disulfide.

The protein belongs to the urotensin-2 family. In terms of tissue distribution, brain specific. Predominantly expressed in motoneurons of the brainstem and spinal cord.

Its subcellular location is the secreted. Highly potent vasoconstrictor. This chain is Urotensin-2 (Uts2), found in Mus musculus (Mouse).